A 193-amino-acid chain; its full sequence is Sarcoplasmic calcium-binding protein (193 aa).

3 EF-hand domains span residues 16–40, 57–92, and 101–136; these read MYDI…NTLI, IMSN…LCCG, and CFKT…RSAF. 14 residues coordinate Ca(2+): Asp-18, Asp-20, Asn-22, Tyr-24, Asp-29, Asp-70, Asn-72, Asp-74, Gln-76, Glu-81, Asp-114, Asn-116, Asp-118, and Glu-125.

Monomer and dimer. As to expression, skeletal muscle (at protein level).

Like parvalbumins, SCPs seem to be more abundant in fast contracting muscles, but no functional relationship can be established from this distribution. This is Sarcoplasmic calcium-binding protein from Scylla paramamosain (Mud crab).